Reading from the N-terminus, the 286-residue chain is Probable aquaporin-3 (286 aa).

The tract at residues 1–34 is disordered; that stretch reads MADTYGMNGHNGHVKDRRSSSMNGRNRLYAQQEP. Over 1–52 the chain is Cytoplasmic; sequence MADTYGMNGHNGHVKDRRSSSMNGRNRLYAQQEPQRTTHLSEFGKHMVAASG. The helical transmembrane segment at 53-73 threads the bilayer; the sequence is EFVGTFLFLYFGYAGNIVAVL. Topologically, residues 74 to 87 are extracellular; that stretch reads QEPISGPNGTLANN. 2 N-linked (GlcNAc...) asparagine glycosylation sites follow: asparagine 81 and asparagine 86. The helical transmembrane segment at 88 to 108 threads the bilayer; it reads TVMYIAMAYGFSLLVNVWTFY. The Cytoplasmic segment spans residues 109–135; that stretch reads RISGGLFNPAVTFGLCLSGQLPWIRAL. The NPA 1 motif lies at 116-118; it reads NPA. A helical membrane pass occupies residues 136-156; that stretch reads FLFPSQIIAAMCAGGLVNAMF. Topologically, residues 157–175 are extracellular; the sequence is PGSASIANTTLGPNTSIAQ. N-linked (GlcNAc...) asparagine glycans are attached at residues asparagine 164 and asparagine 170. The chain crosses the membrane as a helical span at residues 176–196; sequence GVFLEMFFTAQLVFVVLMLAA. The Cytoplasmic portion of the chain corresponds to 197 to 202; the sequence is EKSRDT. A helical membrane pass occupies residues 203 to 223; it reads FLAPVGIGLALFVALIPGVFV. The Extracellular segment spans residues 224–244; sequence TGGSANPVRSFGCAVGSRDFP. An NPA 2 motif is present at residues 229-231; that stretch reads NPV. The chain crosses the membrane as a helical span at residues 245-265; the sequence is GYHWIYWVGPLLGAALAAGYF. Residues 266-286 are Cytoplasmic-facing; that stretch reads RLVKMMHYEEANPGQDSPVDV.

The protein belongs to the MIP/aquaporin (TC 1.A.8) family.

It is found in the membrane. The catalysed reaction is H2O(in) = H2O(out). Functionally, probable water channel that may have redundant functions with FgAQP5. This is Probable aquaporin-3 from Gibberella zeae (strain ATCC MYA-4620 / CBS 123657 / FGSC 9075 / NRRL 31084 / PH-1) (Wheat head blight fungus).